The chain runs to 1434 residues: Probable ATP-dependent RNA helicase spindle-E (1434 aa).

A Helicase ATP-binding domain is found at 125–292 (LAAINAHPVV…FTTTNSIPPV (168 aa)). Position 138–145 (138–145 (GETGCGKT)) interacts with ATP. The DEAH box motif lies at 238–241 (DEVH). The Helicase C-terminal domain occupies 354 to 526 (QSRQSYDEAL…NSVLKAKVLN (173 aa)). In terms of domain architecture, Tudor spans 938 to 1001 (ASAIAKGMMV…RLMPRELTEQ (64 aa)).

It belongs to the DEAD box helicase family. DEAH subfamily.

It is found in the cytoplasm. It localises to the perinuclear region. The protein localises to the cytoplasmic ribonucleoprotein granule. It carries out the reaction ATP + H2O = ADP + phosphate + H(+). In terms of biological role, probable ATP-binding RNA helicase which plays a central role during spermatogenesis and oogenesis by repressing transposable elements and preventing their mobilization, which is essential for the germline integrity. Acts via the piRNA metabolic process, which mediates the repression of transposable elements during meiosis by forming complexes composed of piRNAs and Piwi and govern the methylation and subsequent repression of transposons. Involved in the repression of LTR retrotransposon copia. Also involved in telomere regulation by repressing specialized telomeric retroelements HeT-A, TAHRE, and TART; Drosophila telomeres being maintained by transposition of specialized telomeric retroelements. Involved in telomeric trans-silencing, a repression mechanism by which a transposon or a transgene inserted in subtelomeric heterochromatin has the capacity to repress in trans in the female germline, a homologous transposon, or transgene located in euchromatin. Involved in the repression of testis-expressed Stellate genes by the homologous Su(Ste) repeats. Required for anteroposterior and dorsoventral axis formation during oogenesis. Key component of the perinuclear meiotic nuage, an electron dense structure involved in the post-transcriptional regulation of transposons and mRNAs; required for recruitment of other nuage comonents including vas, krimp, aub and mael. May have a role in production of piwi-interacting RNA (piRNA). This chain is Probable ATP-dependent RNA helicase spindle-E, found in Drosophila melanogaster (Fruit fly).